The following is a 496-amino-acid chain: Aspartic proteinase (496 aa).

The signal sequence occupies residues methionine 1–alanine 24. The propeptide at serine 25–threonine 59 is activation peptide. Positions tyrosine 77–alanine 493 constitute a Peptidase A1 domain. Residue aspartate 95 is part of the active site. Cystine bridges form between cysteine 108–cysteine 114 and cysteine 273–cysteine 277. The active site involves aspartate 282. One can recognise a Saposin B-type domain in the interval isoleucine 307–proline 407. Cystine bridges form between cysteine 312–cysteine 401, cysteine 337–cysteine 373, cysteine 343–cysteine 370, and cysteine 415–cysteine 452. Residue asparagine 387 is glycosylated (N-linked (GlcNAc...) asparagine).

It belongs to the peptidase A1 family.

Its subcellular location is the vacuole. Functionally, involved in the breakdown of propeptides of storage proteins in protein-storage vacuoles. This is Aspartic proteinase (RAP) from Oryza sativa subsp. japonica (Rice).